The following is a 312-amino-acid chain: Aquaporin-6 (312 aa).

The Cytoplasmic segment spans residues 1–50; the sequence is MDDKFDDDALPNSKTTAKDYEDKLPEYDYTTTFPNTWMRLREPFREYFAE. Residues 51–71 traverse the membrane as a helical segment; sequence FVGVAVLIIFGVGADCQVVLS. The Extracellular segment spans residues 72 to 89; sequence ANTGVASSPKGSYLSLNC. A helical membrane pass occupies residues 90-110; sequence GWAIGTAMGVWISGGISGGHI. The NPA 1 motif lies at 111–113; sequence NPA. Residues 111 to 128 lie on the Cytoplasmic side of the membrane; that stretch reads NPAVTLAMATWRGFPWWK. The helical transmembrane segment at 129–149 threads the bilayer; sequence VPGFIFAQLLGGIVGAGLVYV. Topologically, residues 150-183 are extracellular; the sequence is NYIHAIDIVEGGRHIRTLDTAGLFATYAADYMTN. The N-linked (GlcNAc...) asparagine glycan is linked to Asn-183. Residues 184-204 traverse the membrane as a helical segment; that stretch reads LSCFFSEFLATAVLIIVIHAM. Residues 205–213 are Cytoplasmic-facing; it reads NDKRNTPPP. A helical membrane pass occupies residues 214 to 234; it reads AGIVPFVLFFLILGIGASLGM. Residues 235–267 lie on the Extracellular side of the membrane; sequence ETGYAINPARDLGPRMLTAMVGYGRQVFAFRNQ. The NPA 2 signature appears at 241–243; that stretch reads NPA. The chain crosses the membrane as a helical span at residues 268–288; the sequence is YWIWCPVLAPFLGAQVGTIFY. The Cytoplasmic segment spans residues 289–312; it reads DLFFYKGQDNVFGRLGSHIHISPA.

It belongs to the MIP/aquaporin (TC 1.A.8) family.

The protein resides in the membrane. It catalyses the reaction H2O(in) = H2O(out). In terms of biological role, water channel required to facilitate the transport of water across membranes. Does not mediate the transport carbon dioxide nor nitric oxide across the membrane. Plays a key role in root water transport of mycorrhizal plant such ectomycorrhizal white spruce or trembling aspen via the hydration at the hyphal-root interphase. Contributes in fungal cellular processes during the basidiocarp formation. The sequence is that of Aquaporin-6 from Laccaria bicolor (Bicoloured deceiver).